The chain runs to 662 residues: DNA ligase (662 aa).

NAD(+)-binding positions include 32–36 (DAEYD), 81–82 (SL), and E112. K114 acts as the N6-AMP-lysine intermediate in catalysis. NAD(+) is bound by residues R135, E170, K286, and K310. Residues C402, C405, C420, and C425 each coordinate Zn(2+). The region spanning 583–662 (PKGGPLTGST…AELHAMLRGE (80 aa)) is the BRCT domain.

Belongs to the NAD-dependent DNA ligase family. LigA subfamily. Mg(2+) is required as a cofactor. It depends on Mn(2+) as a cofactor.

It catalyses the reaction NAD(+) + (deoxyribonucleotide)n-3'-hydroxyl + 5'-phospho-(deoxyribonucleotide)m = (deoxyribonucleotide)n+m + AMP + beta-nicotinamide D-nucleotide.. DNA ligase that catalyzes the formation of phosphodiester linkages between 5'-phosphoryl and 3'-hydroxyl groups in double-stranded DNA using NAD as a coenzyme and as the energy source for the reaction. It is essential for DNA replication and repair of damaged DNA. The polypeptide is DNA ligase (Solibacter usitatus (strain Ellin6076)).